The following is a 244-amino-acid chain: Phosphoadenosine 5'-phosphosulfate reductase (244 aa).

C239 serves as the catalytic Nucleophile; cysteine thiosulfonate intermediate.

The protein belongs to the PAPS reductase family. CysH subfamily.

The protein resides in the cytoplasm. It carries out the reaction [thioredoxin]-disulfide + sulfite + adenosine 3',5'-bisphosphate + 2 H(+) = [thioredoxin]-dithiol + 3'-phosphoadenylyl sulfate. Its pathway is sulfur metabolism; hydrogen sulfide biosynthesis; sulfite from sulfate: step 3/3. Functionally, catalyzes the formation of sulfite from phosphoadenosine 5'-phosphosulfate (PAPS) using thioredoxin as an electron donor. The polypeptide is Phosphoadenosine 5'-phosphosulfate reductase (Escherichia coli O8 (strain IAI1)).